The primary structure comprises 399 residues: S-adenosylmethionine synthase (399 aa).

Residue His-17 coordinates ATP. Asp-19 lines the Mg(2+) pocket. K(+) is bound at residue Glu-45. Residues Glu-58 and Gln-101 each contribute to the L-methionine site. Residues 101 to 111 (QSPDIAQGVDK) form a flexible loop region. ATP contacts are provided by residues 176–178 (DGK), 243–244 (RF), Asp-252, 258–259 (RK), and Lys-279. L-methionine is bound at residue Asp-252. Lys-283 provides a ligand contact to L-methionine.

The protein belongs to the AdoMet synthase family. In terms of assembly, homotetramer; dimer of dimers. The cofactor is Mg(2+). Requires K(+) as cofactor.

It is found in the cytoplasm. The catalysed reaction is L-methionine + ATP + H2O = S-adenosyl-L-methionine + phosphate + diphosphate. It functions in the pathway amino-acid biosynthesis; S-adenosyl-L-methionine biosynthesis; S-adenosyl-L-methionine from L-methionine: step 1/1. Functionally, catalyzes the formation of S-adenosylmethionine (AdoMet) from methionine and ATP. The overall synthetic reaction is composed of two sequential steps, AdoMet formation and the subsequent tripolyphosphate hydrolysis which occurs prior to release of AdoMet from the enzyme. This Staphylococcus epidermidis (strain ATCC 35984 / DSM 28319 / BCRC 17069 / CCUG 31568 / BM 3577 / RP62A) protein is S-adenosylmethionine synthase.